Here is a 427-residue protein sequence, read N- to C-terminus: Endothelin-1 receptor (427 aa).

An N-terminal signal peptide occupies residues M1–S20. Residues D21–K80 are Extracellular-facing. 2 N-linked (GlcNAc...) asparagine glycosylation sites follow: N29 and N62. Residues Y81–L102 traverse the membrane as a helical segment. The Cytoplasmic portion of the chain corresponds to R103–R112. A helical transmembrane segment spans residues N113–I132. The Extracellular segment spans residues D133–K159. A disulfide bridge links C158 with C239. A helical membrane pass occupies residues L160 to V181. Residues D182 to E205 lie on the Cytoplasmic side of the membrane. The chain crosses the membrane as a helical span at residues I206 to F229. The Extracellular portion of the chain corresponds to E230–D256. The chain crosses the membrane as a helical span at residues W257–M278. The Cytoplasmic segment spans residues T279–K306. Residues T307–L328 traverse the membrane as a helical segment. The Extracellular portion of the chain corresponds to K329–L347. Residues L348–V372 form a helical membrane-spanning segment. The Cytoplasmic portion of the chain corresponds to S373 to N427. Position 425 is a phosphoserine (S425).

This sequence belongs to the G-protein coupled receptor 1 family. Endothelin receptor subfamily. EDNRA sub-subfamily. As to quaternary structure, interacts with HDAC7 and KAT5.

It is found in the cell membrane. Its function is as follows. Receptor for endothelin-1. Mediates its action by association with G proteins that activate a phosphatidylinositol-calcium second messenger system. The rank order of binding affinities for ET-A is: ET1 &gt; ET2 &gt;&gt; ET3. The chain is Endothelin-1 receptor from Bos taurus (Bovine).